We begin with the raw amino-acid sequence, 438 residues long: Enolase (438 aa).

(2R)-2-phosphoglycerate is bound at residue Q163. E205 (proton donor) is an active-site residue. Residues D243, E292, and D319 each coordinate Mg(2+). 4 residues coordinate (2R)-2-phosphoglycerate: K344, R373, S374, and K395. The Proton acceptor role is filled by K344.

Belongs to the enolase family. It depends on Mg(2+) as a cofactor.

It is found in the cytoplasm. It localises to the secreted. Its subcellular location is the cell surface. It carries out the reaction (2R)-2-phosphoglycerate = phosphoenolpyruvate + H2O. It functions in the pathway carbohydrate degradation; glycolysis; pyruvate from D-glyceraldehyde 3-phosphate: step 4/5. In terms of biological role, catalyzes the reversible conversion of 2-phosphoglycerate (2-PG) into phosphoenolpyruvate (PEP). It is essential for the degradation of carbohydrates via glycolysis. The protein is Enolase of Streptococcus agalactiae.